The primary structure comprises 331 residues: Lipoyl synthase (331 aa).

Residues 1 to 33 form a disordered region; sequence MSDALIASSSEAPQSPAEQYDPTRKQKSADKTA. The segment covering 7-19 has biased composition (low complexity); sequence ASSSEAPQSPAEQ. Basic and acidic residues predominate over residues 21–33; that stretch reads DPTRKQKSADKTA. The [4Fe-4S] cluster site is built by Cys-78, Cys-83, Cys-89, Cys-104, Cys-108, Cys-111, and Ser-318. One can recognise a Radical SAM core domain in the interval 89 to 307; the sequence is CFGKGTATFM…EEEAYKMGFT (219 aa).

This sequence belongs to the radical SAM superfamily. Lipoyl synthase family. Requires [4Fe-4S] cluster as cofactor.

The protein resides in the cytoplasm. It catalyses the reaction [[Fe-S] cluster scaffold protein carrying a second [4Fe-4S](2+) cluster] + N(6)-octanoyl-L-lysyl-[protein] + 2 oxidized [2Fe-2S]-[ferredoxin] + 2 S-adenosyl-L-methionine + 4 H(+) = [[Fe-S] cluster scaffold protein] + N(6)-[(R)-dihydrolipoyl]-L-lysyl-[protein] + 4 Fe(3+) + 2 hydrogen sulfide + 2 5'-deoxyadenosine + 2 L-methionine + 2 reduced [2Fe-2S]-[ferredoxin]. Its pathway is protein modification; protein lipoylation via endogenous pathway; protein N(6)-(lipoyl)lysine from octanoyl-[acyl-carrier-protein]: step 2/2. Catalyzes the radical-mediated insertion of two sulfur atoms into the C-6 and C-8 positions of the octanoyl moiety bound to the lipoyl domains of lipoate-dependent enzymes, thereby converting the octanoylated domains into lipoylated derivatives. The protein is Lipoyl synthase of Cupriavidus pinatubonensis (strain JMP 134 / LMG 1197) (Cupriavidus necator (strain JMP 134)).